The following is a 463-amino-acid chain: MGKEKVHINIVVIGHVDSGKSTTTGHLIYKCGGIDKRTIEKFEKEAQEMGKGSFKYAWVLDKLKAERERGITIDIALWKFETAKYYITIIDAPGHRDFIKNMITGTSQADCAVLVVACGTGEFEAGISKNGQTREHALLAQTLGVKQLIVACNKMDSTEPPFSEARFTEITNEVSGFIKKIGYNPKAVPFVPISGFNGDNMLEVSSNMPWFKGWAVERKEGNASGKTLLEALDSIIPPQRPTDRPLRLPLQDVYKIGGIGTVPVGRVETGIIKPGMVVTFAPQNVTTEVKSVEMHHESLPEAVPGDNVGFNVKNVSVKDIRRGSVCSDSKQDPAKEARTFHAQVIIMNHPGQISNGYTPVLDCHTAHIACKFNELKEKVDRRTGKKVEDFPKFLKSGDAGIVELIPTKPLCVESFTDYAPLGRFAVRDMRQTVAVGVIKSVEKSDGSSGKVTKSAQKAAPKKK.

The tr-type G domain maps to 5–242; that stretch reads KVHINIVVIG…DSIIPPQRPT (238 aa). The segment at 14–21 is G1; sequence GHVDSGKS. GTP is bound at residue 14-21; it reads GHVDSGKS. The G2 stretch occupies residues 70 to 74; that stretch reads GITID. The interval 91–94 is G3; the sequence is DAPG. GTP is bound by residues 91–95 and 153–156; these read DAPGH and NKMD. The segment at 153–156 is G4; that stretch reads NKMD. Residues 194-196 form a G5 region; that stretch reads SGF. 5-glutamyl glycerylphosphorylethanolamine occurs at positions 301 and 374. The segment at 443-463 is disordered; sequence KSDGSSGKVTKSAQKAAPKKK. Positions 446 to 455 are enriched in polar residues; it reads GSSGKVTKSA.

The protein belongs to the TRAFAC class translation factor GTPase superfamily. Classic translation factor GTPase family. EF-Tu/EF-1A subfamily.

It is found in the cytoplasm. Its function is as follows. This protein promotes the GTP-dependent binding of aminoacyl-tRNA to the A-site of ribosomes during protein biosynthesis. This chain is Elongation factor 1-alpha, found in Caenorhabditis elegans.